We begin with the raw amino-acid sequence, 408 residues long: Putative UPF0496 protein 2 (408 aa).

Helical transmembrane passes span 224 to 244 (RIARGTAAAALVGACAAAIVA) and 252 to 272 (ALVGIGVAAAAFGATPAGAAR). A disordered region spans residues 385-408 (MARGLPPPSPATVTTTSEERLTSS).

This sequence belongs to the UPF0496 family.

It is found in the membrane. This chain is Putative UPF0496 protein 2, found in Oryza sativa subsp. indica (Rice).